The sequence spans 85 residues: U4-theraphotoxin-Hhn1d (85 aa).

The N-terminal stretch at 1 to 22 is a signal peptide; it reads MKVTLIAILTCAAVLVLHTTAA. The propeptide occupies 23–48; that stretch reads EELEAESQLMEVGMPDTELAAVDEER. Disulfide bonds link cysteine 52-cysteine 66, cysteine 56-cysteine 77, and cysteine 71-cysteine 82.

This sequence belongs to the neurotoxin 12 (Hwtx-2) family. 02 (Hwtx-2) subfamily. As to expression, expressed by the venom gland.

The protein resides in the secreted. Its function is as follows. Postsynaptic neurotoxin. In Cyriopagopus hainanus (Chinese bird spider), this protein is U4-theraphotoxin-Hhn1d.